Here is a 643-residue protein sequence, read N- to C-terminus: Threonine--tRNA ligase (643 aa).

The region spanning 1-61 is the TGS domain; it reads MPIITLPDGS…EQDATLEIIT (61 aa). A catalytic region spans residues 243-534; the sequence is DHRKIGKALD…ITEEYAGFFP (292 aa). The Zn(2+) site is built by cysteine 334, histidine 385, and histidine 511.

It belongs to the class-II aminoacyl-tRNA synthetase family. Homodimer. The cofactor is Zn(2+).

It localises to the cytoplasm. It carries out the reaction tRNA(Thr) + L-threonine + ATP = L-threonyl-tRNA(Thr) + AMP + diphosphate + H(+). In terms of biological role, catalyzes the attachment of threonine to tRNA(Thr) in a two-step reaction: L-threonine is first activated by ATP to form Thr-AMP and then transferred to the acceptor end of tRNA(Thr). Also edits incorrectly charged L-seryl-tRNA(Thr). The polypeptide is Threonine--tRNA ligase (Haemophilus influenzae (strain 86-028NP)).